We begin with the raw amino-acid sequence, 2376 residues long: Cell morphogenesis protein PAG1 (2376 aa).

A disordered region spans residues 1–30 (MASRFTFPPQRDQGIGFTFPPTNKAEGSSN). Residue Ser-141 is modified to Phosphoserine. The interval 275-294 (SSSNTTSKYKHNNNTNNLPG) is disordered. Ser-1144 is subject to Phosphoserine. At Thr-2264 the chain carries Phosphothreonine. A phosphoserine mark is found at Ser-2267 and Ser-2355.

To S.pombe mor2. Associates with CBK1.

Functionally, seems to play a role in cell morphogenesis. The sequence is that of Cell morphogenesis protein PAG1 (TAO3) from Saccharomyces cerevisiae (strain ATCC 204508 / S288c) (Baker's yeast).